Here is a 682-residue protein sequence, read N- to C-terminus: Serine/threonine-protein kinase PLK2 (682 aa).

Residues 25–67 are disordered; it reads ACGGDSKKKRPQQPSEDGQSQAQVTPAAPHHHHHHSHSGPEIS. Residues 36-48 show a composition bias toward polar residues; sequence QQPSEDGQSQAQV. A Protein kinase domain is found at 79-331; it reads YCRGKVLGKG…LDDIIRHDFF (253 aa). Residues 85–93 and Lys-108 each bind ATP; that span reads LGKGGFAKC. Asp-202 serves as the catalytic Proton acceptor. Position 236 is a phosphothreonine (Thr-236). The segment at 402 to 430 is disordered; it reads TSITQQPSKHRTDEELQPPPTTFAKSGTS. 2 POLO box domains span residues 500–578 and 598–682; these read WVTK…YMEE and YLLQ…QRCN.

This sequence belongs to the protein kinase superfamily. Ser/Thr protein kinase family. CDC5/Polo subfamily. In terms of assembly, interacts with CIB1. Interacts with NSF; causing NSF dissociation from GRIA2. Post-translationally, catalytic activity is enhanced by phosphorylation of Thr-236.

The protein localises to the cytoplasm. The protein resides in the cytoskeleton. It localises to the microtubule organizing center. It is found in the centrosome. Its subcellular location is the centriole. The protein localises to the cell projection. The protein resides in the dendrite. The catalysed reaction is L-seryl-[protein] + ATP = O-phospho-L-seryl-[protein] + ADP + H(+). It carries out the reaction L-threonyl-[protein] + ATP = O-phospho-L-threonyl-[protein] + ADP + H(+). With respect to regulation, activated by phosphorylation of Thr-236. Once activated, activity is stimulated by binding target proteins. Functionally, tumor suppressor serine/threonine-protein kinase involved in synaptic plasticity, centriole duplication and G1/S phase transition. Polo-like kinases act by binding and phosphorylating proteins that are already phosphorylated on a specific motif recognized by the POLO box domains. Phosphorylates CPAP, NPM1, RAPGEF2, RASGRF1, SNCA, SIPA1L1 and SYNGAP1. Plays a key role in synaptic plasticity and memory by regulating the Ras and Rap protein signaling: required for overactivity-dependent spine remodeling by phosphorylating the Ras activator RASGRF1 and the Rap inhibitor SIPA1L1 leading to their degradation by the proteasome. Conversely, phosphorylates the Rap activator RAPGEF2 and the Ras inhibitor SYNGAP1, promoting their activity. Also regulates synaptic plasticity independently of kinase activity, via its interaction with NSF that disrupts the interaction between NSF and the GRIA2 subunit of AMPARs, leading to a rapid rundown of AMPAR-mediated current that occludes long term depression. Required for procentriole formation and centriole duplication by phosphorylating CPAP and NPM1, respectively. Its induction by p53/TP53 suggests that it may participate in the mitotic checkpoint following stress. The polypeptide is Serine/threonine-protein kinase PLK2 (Plk2) (Rattus norvegicus (Rat)).